The following is a 651-amino-acid chain: Probable replication restart protein PriA (651 aa).

The Zn(2+) site is built by C371, C374, C380, C383, C399, C402, C411, and C414.

It belongs to the helicase family. PriA subfamily. In terms of assembly, component of the replication restart primosome. Requires Zn(2+) as cofactor.

In terms of biological role, initiates the restart of stalled replication forks, which reloads the replicative helicase on sites other than the origin of replication. Recognizes and binds to abandoned replication forks and remodels them to uncover a helicase loading site. Promotes assembly of the primosome at these replication forks. The polypeptide is Probable replication restart protein PriA (Mycobacterium leprae (strain TN)).